Consider the following 338-residue polypeptide: MDEPACNGTSNEWQRPQLIVAGPRAARRRQMLASLDLNTLLALEALLEHRNVTQAARHLGLSQPSVSRALIRLRGVFNDDLLVRGSSGMVPTPHAQRLGQMLPPVLDSIRGMVDPGLDQGEWRLTARMAMPDHQAIVLLPPFLPLMRERAPNLDIVTDSLLALRRLEQGEIDLAVGQIGEAPPGYFRRRLYNDRFACLLRNGHPALEQESIIDTFSALRHAAIASDTKDGFGRVHDDLVKLDLQDPDPVLVSNVLTAGLAIVSTDLVLVVPRRVATRNAALLPLVIVDPPVELPPYEVALIWHERCHRDPDHRWLRQEIAAAATATEQGQSTDAASRQ.

The HTH lysR-type domain maps to 35–92; sequence LDLNTLLALEALLEHRNVTQAARHLGLSQPSVSRALIRLRGVFNDDLLVRGSSGMVPT. A DNA-binding region (H-T-H motif) is located at residues 52-72; that stretch reads VTQAARHLGLSQPSVSRALIR.

This sequence belongs to the LysR transcriptional regulatory family.

Transcriptional activator that regulates the expression of genes involved in symbiosis. Among other targets it acts on the nolWBTUV operon. The chain is HTH-type transcriptional regulator SyrM 1 (syrM1) from Sinorhizobium fredii (strain NBRC 101917 / NGR234).